The following is a 349-amino-acid chain: UDP-N-acetylenolpyruvoylglucosamine reductase (349 aa).

Positions 25–197 constitute an FAD-binding PCMH-type domain; the sequence is GIDARARYAA…VSVTFRLPKR (173 aa). Arginine 173 is a catalytic residue. The active-site Proton donor is the serine 249. Glutamate 345 is an active-site residue.

This sequence belongs to the MurB family. FAD serves as cofactor.

It localises to the cytoplasm. The catalysed reaction is UDP-N-acetyl-alpha-D-muramate + NADP(+) = UDP-N-acetyl-3-O-(1-carboxyvinyl)-alpha-D-glucosamine + NADPH + H(+). Its pathway is cell wall biogenesis; peptidoglycan biosynthesis. In terms of biological role, cell wall formation. The chain is UDP-N-acetylenolpyruvoylglucosamine reductase from Burkholderia multivorans (strain ATCC 17616 / 249).